A 309-amino-acid polypeptide reads, in one-letter code: Thiamine-monophosphate kinase (309 aa).

Positions 25, 39, 40, and 41 each coordinate Mg(2+). Asp48 provides a ligand contact to substrate. Mg(2+) is bound by residues Asp69 and Asp117. ATP contacts are provided by residues 116–117 and Arg140; that span reads GD. Asp201 is a Mg(2+) binding site. Ser203 is a binding site for ATP. A Mg(2+)-binding site is contributed by Asp204. Residues Glu250 and Trp298 each contribute to the substrate site.

The protein belongs to the thiamine-monophosphate kinase family.

The catalysed reaction is thiamine phosphate + ATP = thiamine diphosphate + ADP. It functions in the pathway cofactor biosynthesis; thiamine diphosphate biosynthesis; thiamine diphosphate from thiamine phosphate: step 1/1. Catalyzes the ATP-dependent phosphorylation of thiamine-monophosphate (TMP) to form thiamine-pyrophosphate (TPP), the active form of vitamin B1. The polypeptide is Thiamine-monophosphate kinase (Pyrococcus horikoshii (strain ATCC 700860 / DSM 12428 / JCM 9974 / NBRC 100139 / OT-3)).